A 188-amino-acid polypeptide reads, in one-letter code: Peptidyl-tRNA hydrolase (188 aa).

F15 is a tRNA binding site. H20 acts as the Proton acceptor in catalysis. TRNA-binding residues include Y64, N66, and N112.

This sequence belongs to the PTH family. Monomer.

It is found in the cytoplasm. It carries out the reaction an N-acyl-L-alpha-aminoacyl-tRNA + H2O = an N-acyl-L-amino acid + a tRNA + H(+). Functionally, hydrolyzes ribosome-free peptidyl-tRNAs (with 1 or more amino acids incorporated), which drop off the ribosome during protein synthesis, or as a result of ribosome stalling. Its function is as follows. Catalyzes the release of premature peptidyl moieties from peptidyl-tRNA molecules trapped in stalled 50S ribosomal subunits, and thus maintains levels of free tRNAs and 50S ribosomes. This chain is Peptidyl-tRNA hydrolase, found in Borrelia turicatae (strain 91E135).